Here is a 430-residue protein sequence, read N- to C-terminus: Adenylosuccinate synthetase (430 aa).

GTP contacts are provided by residues 13 to 19 (GDEGKGK) and 41 to 43 (GHT). Residue aspartate 14 is the Proton acceptor of the active site. Residues aspartate 14 and glycine 41 each coordinate Mg(2+). IMP-binding positions include 14 to 17 (DEGK), 39 to 42 (NAGH), threonine 130, arginine 144, glutamine 225, threonine 240, and arginine 304. The Proton donor role is filled by histidine 42. 300–306 (STTGRAR) is a substrate binding site. GTP is bound by residues arginine 306, 332–334 (KLD), and 414–416 (STG).

Belongs to the adenylosuccinate synthetase family. In terms of assembly, homodimer. Requires Mg(2+) as cofactor.

Its subcellular location is the cytoplasm. The enzyme catalyses IMP + L-aspartate + GTP = N(6)-(1,2-dicarboxyethyl)-AMP + GDP + phosphate + 2 H(+). It functions in the pathway purine metabolism; AMP biosynthesis via de novo pathway; AMP from IMP: step 1/2. Functionally, plays an important role in the de novo pathway of purine nucleotide biosynthesis. Catalyzes the first committed step in the biosynthesis of AMP from IMP. The protein is Adenylosuccinate synthetase of Pseudomonas entomophila (strain L48).